Here is a 126-residue protein sequence, read N- to C-terminus: Histone H2B type 1-N (126 aa).

A compositionally biased stretch (low complexity) spans 1–12 (MPEPSKSAPAPK). Residues 1–36 (MPEPSKSAPAPKKGSKKAVTKAQKKDGKKRKRSRKE) form a disordered region. Position 2 is an N-acetylproline (Pro-2). Glu-3 is subject to ADP-ribosyl glutamic acid. At Lys-6 the chain carries N6-(2-hydroxyisobutyryl)lysine; alternate. N6-(beta-hydroxybutyryl)lysine; alternate is present on Lys-6. Lys-6 carries the post-translational modification N6-acetyllysine; alternate. Lys-6 carries the post-translational modification N6-butyryllysine; alternate. Lys-6 carries the N6-crotonyllysine; alternate modification. N6-lactoyllysine; alternate is present on Lys-6. Lys-6 is covalently cross-linked (Glycyl lysine isopeptide (Lys-Gly) (interchain with G-Cter in SUMO2); alternate). Ser-7 bears the ADP-ribosylserine mark. Lys-12 carries the N6-(beta-hydroxybutyryl)lysine; alternate modification. N6-acetyllysine; alternate is present on residues Lys-12 and Lys-13. N6-crotonyllysine; alternate occurs at positions 12 and 13. Lys-12 is modified (N6-lactoyllysine; alternate). The residue at position 13 (Lys-13) is an N6-(2-hydroxyisobutyryl)lysine; alternate. Ser-15 is subject to Phosphoserine; by STK4/MST1. An N6-acetyllysine; alternate mark is found at Lys-16, Lys-17, Lys-21, and Lys-24. N6-crotonyllysine; alternate occurs at positions 16, 17, 21, and 24. Residues Lys-16, Lys-17, Lys-21, and Lys-24 each carry the N6-lactoyllysine; alternate modification. Lys-17 and Lys-21 each carry N6-(beta-hydroxybutyryl)lysine; alternate. Lys-17 carries the post-translational modification N6-glutaryllysine; alternate. N6-(2-hydroxyisobutyryl)lysine; alternate is present on residues Lys-21 and Lys-24. Lys-21 carries the N6-butyryllysine; alternate modification. A Glycyl lysine isopeptide (Lys-Gly) (interchain with G-Cter in SUMO2); alternate cross-link involves residue Lys-21. At Lys-25 the chain carries N6-(2-hydroxyisobutyryl)lysine. At Lys-35 the chain carries N6-(2-hydroxyisobutyryl)lysine; alternate. Lys-35 carries the post-translational modification N6-(beta-hydroxybutyryl)lysine; alternate. Lys-35 carries the post-translational modification N6-crotonyllysine; alternate. Lys-35 carries the post-translational modification N6-glutaryllysine; alternate. Lys-35 is subject to N6-succinyllysine; alternate. Residue Lys-35 forms a Glycyl lysine isopeptide (Lys-Gly) (interchain with G-Cter in ubiquitin); alternate linkage. A PolyADP-ribosyl glutamic acid modification is found at Glu-36. Ser-37 is subject to Phosphoserine; by AMPK. Lys-44, Lys-47, and Lys-58 each carry N6-(2-hydroxyisobutyryl)lysine; alternate. Lys-44 is modified (N6-lactoyllysine; alternate). 2 positions are modified to N6-glutaryllysine; alternate: Lys-44 and Lys-47. Lys-47 carries the post-translational modification N6-methyllysine; alternate. Lys-58 carries the post-translational modification N6,N6-dimethyllysine; alternate. Arg-80 carries the post-translational modification Dimethylated arginine. Lys-86 carries the post-translational modification N6-(2-hydroxyisobutyryl)lysine; alternate. At Lys-86 the chain carries N6-(beta-hydroxybutyryl)lysine; alternate. Lys-86 is subject to N6-acetyllysine; alternate. Lys-86 bears the N6-lactoyllysine; alternate mark. Residue Lys-86 is modified to N6,N6,N6-trimethyllysine; alternate. Arg-87 and Arg-93 each carry omega-N-methylarginine. Lys-109 carries the N6-(2-hydroxyisobutyryl)lysine; alternate modification. The residue at position 109 (Lys-109) is an N6-lactoyllysine; alternate. Lys-109 carries the post-translational modification N6-glutaryllysine; alternate. Lys-109 carries the N6-methyllysine; alternate modification. O-linked (GlcNAc) serine glycosylation is present at Ser-113. Thr-116 is modified (phosphothreonine). Residues Lys-117 and Lys-121 each carry the N6-(2-hydroxyisobutyryl)lysine; alternate modification. Lys-117 and Lys-121 each carry N6-(beta-hydroxybutyryl)lysine; alternate. N6-lactoyllysine; alternate is present on residues Lys-117 and Lys-121. Lys-117 and Lys-121 each carry N6-glutaryllysine; alternate. Residues Lys-117 and Lys-121 each carry the N6-succinyllysine; alternate modification. Residue Lys-117 is modified to N6-malonyllysine; alternate. Lys-117 bears the N6-methylated lysine; alternate mark. A Glycyl lysine isopeptide (Lys-Gly) (interchain with G-Cter in ubiquitin); alternate cross-link involves residue Lys-121.

This sequence belongs to the histone H2B family. In terms of assembly, the nucleosome is a histone octamer containing two molecules each of H2A, H2B, H3 and H4 assembled in one H3-H4 heterotetramer and two H2A-H2B heterodimers. The octamer wraps approximately 147 bp of DNA. In terms of processing, monoubiquitination at Lys-35 (H2BK34Ub) by the MSL1/MSL2 dimer is required for histone H3 'Lys-4' (H3K4me) and 'Lys-79' (H3K79me) methylation and transcription activation at specific gene loci, such as HOXA9 and MEIS1 loci. Similarly, monoubiquitination at Lys-121 (H2BK120Ub) by the RNF20/40 complex gives a specific tag for epigenetic transcriptional activation and is also prerequisite for histone H3 'Lys-4' and 'Lys-79' methylation. It also functions cooperatively with the FACT dimer to stimulate elongation by RNA polymerase II. H2BK120Ub also acts as a regulator of mRNA splicing: deubiquitination by USP49 is required for efficient cotranscriptional splicing of a large set of exons. Phosphorylation at Ser-37 (H2BS36ph) by AMPK in response to stress promotes transcription. Phosphorylated on Ser-15 (H2BS14ph) by STK4/MST1 during apoptosis; which facilitates apoptotic chromatin condensation. Also phosphorylated on Ser-15 in response to DNA double strand breaks (DSBs), and in correlation with somatic hypermutation and immunoglobulin class-switch recombination. Post-translationally, glcNAcylation at Ser-113 promotes monoubiquitination of Lys-121. It fluctuates in response to extracellular glucose, and associates with transcribed genes. In terms of processing, ADP-ribosylated by PARP1 or PARP2 on Ser-7 (H2BS6ADPr) in response to DNA damage. H2BS6ADPr promotes recruitment of CHD1L. Mono-ADP-ribosylated on Glu-3 (H2BE2ADPr) by PARP3 in response to single-strand breaks. Poly ADP-ribosylation on Glu-36 (H2BE35ADPr) by PARP1 regulates adipogenesis: it inhibits phosphorylation at Ser-37 (H2BS36ph), thereby blocking expression of pro-adipogenetic genes. Crotonylation (Kcr) is specifically present in male germ cells and marks testis-specific genes in post-meiotic cells, including X-linked genes that escape sex chromosome inactivation in haploid cells. Crotonylation marks active promoters and enhancers and confers resistance to transcriptional repressors. It is also associated with post-meiotically activated genes on autosomes. Post-translationally, lactylated in macrophages by EP300/P300 by using lactoyl-CoA directly derived from endogenous or exogenous lactate, leading to stimulates gene transcription.

It localises to the nucleus. The protein localises to the chromosome. Core component of nucleosome. Nucleosomes wrap and compact DNA into chromatin, limiting DNA accessibility to the cellular machineries which require DNA as a template. Histones thereby play a central role in transcription regulation, DNA repair, DNA replication and chromosomal stability. DNA accessibility is regulated via a complex set of post-translational modifications of histones, also called histone code, and nucleosome remodeling. The sequence is that of Histone H2B type 1-N from Homo sapiens (Human).